The following is a 270-amino-acid chain: MRLIIKNSYEDCSKWTADYICNKIIEFKPTKEKPFVLGLPTGSTPLGVYKELIKKHKEGILSFKHVVTFNMDEYVGLEASHPQSYHYFMMDNFFNHIDIEPKNIHILDGMAKDKKKECEDYEKAIRSYGKIHLFLGGIGADGHIAFNEPYSSLTSRTREKTLTRDTIIMNSRFFEGNEDLVPKTALTVGIGTIMDAEEVLIMATGHAKAEAVHQAVEGGVSHVWTVSALQLHPKSIIICDDAATDELKVKTVKYFLDIEKGNIETNVSRK.

Asp-72 serves as the catalytic Proton acceptor; for enolization step. Asp-141 functions as the For ring-opening step in the catalytic mechanism. His-143 serves as the catalytic Proton acceptor; for ring-opening step. Glu-148 acts as the For ring-opening step in catalysis.

It belongs to the glucosamine/galactosamine-6-phosphate isomerase family. NagB subfamily.

It carries out the reaction alpha-D-glucosamine 6-phosphate + H2O = beta-D-fructose 6-phosphate + NH4(+). Its pathway is amino-sugar metabolism; N-acetylneuraminate degradation; D-fructose 6-phosphate from N-acetylneuraminate: step 5/5. With respect to regulation, allosterically activated by N-acetylglucosamine 6-phosphate (GlcNAc6P). Functionally, catalyzes the reversible isomerization-deamination of glucosamine 6-phosphate (GlcN6P) to form fructose 6-phosphate (Fru6P) and ammonium ion. The protein is Glucosamine-6-phosphate deaminase of Treponema denticola (strain ATCC 35405 / DSM 14222 / CIP 103919 / JCM 8153 / KCTC 15104).